The chain runs to 200 residues: Isochorismatase family protein 2A (200 aa).

This sequence belongs to the isochorismatase family.

The polypeptide is Isochorismatase family protein 2A (Dictyostelium discoideum (Social amoeba)).